The primary structure comprises 453 residues: tRNA modification GTPase MnmE (453 aa).

3 residues coordinate (6S)-5-formyl-5,6,7,8-tetrahydrofolate: R22, E79, and K119. The region spanning 215–376 (GMKVVIAGRP…LKQHLKSLMG (162 aa)) is the TrmE-type G domain. K(+) is bound at residue N225. Residues 225–230 (NAGKSS), 244–250 (TEIAGTT), 269–272 (DTAG), and 334–337 (NKAD) each bind GTP. S229 contributes to the Mg(2+) binding site. Residues T244, I246, and T249 each contribute to the K(+) site. T250 is a Mg(2+) binding site. Residue K453 coordinates (6S)-5-formyl-5,6,7,8-tetrahydrofolate.

Belongs to the TRAFAC class TrmE-Era-EngA-EngB-Septin-like GTPase superfamily. TrmE GTPase family. As to quaternary structure, homodimer. Heterotetramer of two MnmE and two MnmG subunits. K(+) serves as cofactor.

The protein resides in the cytoplasm. In terms of biological role, exhibits a very high intrinsic GTPase hydrolysis rate. Involved in the addition of a carboxymethylaminomethyl (cmnm) group at the wobble position (U34) of certain tRNAs, forming tRNA-cmnm(5)s(2)U34. The protein is tRNA modification GTPase MnmE of Shewanella baltica (strain OS185).